The chain runs to 194 residues: Imidazoleglycerol-phosphate dehydratase (194 aa).

Belongs to the imidazoleglycerol-phosphate dehydratase family.

Its subcellular location is the cytoplasm. It catalyses the reaction D-erythro-1-(imidazol-4-yl)glycerol 3-phosphate = 3-(imidazol-4-yl)-2-oxopropyl phosphate + H2O. It functions in the pathway amino-acid biosynthesis; L-histidine biosynthesis; L-histidine from 5-phospho-alpha-D-ribose 1-diphosphate: step 6/9. This Limosilactobacillus fermentum (strain NBRC 3956 / LMG 18251) (Lactobacillus fermentum) protein is Imidazoleglycerol-phosphate dehydratase.